We begin with the raw amino-acid sequence, 847 residues long: FAST kinase domain-containing protein 1, mitochondrial (847 aa).

Lys360 is modified (N6-acetyllysine). Positions 777–837 (IALEFLDSKA…KDARMDYLRE (61 aa)) constitute an RAP domain.

The protein belongs to the FAST kinase family. As to expression, expression detected in spleen, thymus, testis, ovary, colon, heart, smooth muscle, kidney, brain, lung, liver and white adipose tissue with highest expression in heart.

The protein resides in the mitochondrion. Its function is as follows. Involved in the down-regulation of mitochondrial MT-ND3 mRNA levels which leads to decreased respiratory complex I abundance and activity. This is FAST kinase domain-containing protein 1, mitochondrial (FASTKD1) from Homo sapiens (Human).